The sequence spans 605 residues: Protein spinster (605 aa).

The disordered stretch occupies residues 1–94; the sequence is MSLKHQKQSY…HPLGEHHHIP (94 aa). Over residues 27–38 the composition is skewed to low complexity; sequence SSGSSGSSSSEE. Residues 55–67 show a composition bias toward polar residues; it reads TTYSSQQLMPSDT. Basic residues predominate over residues 76 to 85; it reads RLRPHHHHHH. Residues 115-137 form a helical membrane-spanning segment; the sequence is FTVTVLCFVNLINYMDRFTIAGV. Residue asparagine 149 is glycosylated (N-linked (GlcNAc...) asparagine). 5 helical membrane-spanning segments follow: residues 153 to 173, 180 to 200, 203 to 223, 240 to 260, and 271 to 291; these read GLLQ…FGYL, PWIM…GSFM, FGWF…YSTI, MLAL…IVGS, and WALR…LLIK. N-linked (GlcNAc...) asparagine glycosylation is present at asparagine 319. Transmembrane regions (helical) follow at residues 329–349, 367–387, 401–421, 431–451, and 465–485; these read FTCV…FIYL, FNFG…GSFL, VICA…CLLV, LIFF…DILL, and FQIL…VGAI. Residue asparagine 519 is glycosylated (N-linked (GlcNAc...) asparagine). Residues 558-578 form a helical membrane-spanning segment; the sequence is STSFVEVLGGIFFIFTACFII. A glycan (N-linked (GlcNAc...) asparagine) is linked at asparagine 583.

Belongs to the major facilitator superfamily. Spinster (TC 2.A.1.49) family. In terms of tissue distribution, enriched in brain (at protein level).

It localises to the late endosome membrane. The protein resides in the lysosome membrane. In terms of biological role, probable sphingolipid transporter that plays a central role in endosomes and/or lysosomes storage. Involved in TGF-beta-mediated synaptic growth regulation both pre- and postsynaptically via its function in endosomal storage regulation. Also required during oogenesis by regulating yolk spheres storage. The protein is Protein spinster (spin) of Drosophila melanogaster (Fruit fly).